The primary structure comprises 460 residues: Adenylosuccinate lyase (460 aa).

N(6)-(1,2-dicarboxyethyl)-AMP contacts are provided by residues 15-16, 88-90, and 120-121; these read RY, NHD, and TS. His169 (proton donor/acceptor) is an active-site residue. Gln245 provides a ligand contact to N(6)-(1,2-dicarboxyethyl)-AMP. Ser293 functions as the Proton donor/acceptor in the catalytic mechanism. N(6)-(1,2-dicarboxyethyl)-AMP is bound by residues Ser294, 299–301, Asn307, Arg333, and 338–342; these read KIN and STVLR.

This sequence belongs to the lyase 1 family. Adenylosuccinate lyase subfamily. Homotetramer. Residues from neighboring subunits contribute catalytic and substrate-binding residues to each active site.

The catalysed reaction is N(6)-(1,2-dicarboxyethyl)-AMP = fumarate + AMP. It carries out the reaction (2S)-2-[5-amino-1-(5-phospho-beta-D-ribosyl)imidazole-4-carboxamido]succinate = 5-amino-1-(5-phospho-beta-D-ribosyl)imidazole-4-carboxamide + fumarate. The protein operates within purine metabolism; AMP biosynthesis via de novo pathway; AMP from IMP: step 2/2. It participates in purine metabolism; IMP biosynthesis via de novo pathway; 5-amino-1-(5-phospho-D-ribosyl)imidazole-4-carboxamide from 5-amino-1-(5-phospho-D-ribosyl)imidazole-4-carboxylate: step 2/2. Functionally, catalyzes two reactions in de novo purine nucleotide biosynthesis. Catalyzes the breakdown of 5-aminoimidazole- (N-succinylocarboxamide) ribotide (SAICAR or 2-[5-amino-1-(5-phospho-beta-D-ribosyl)imidazole-4-carboxamido]succinate) to 5-aminoimidazole-4-carboxamide ribotide (AICAR or 5-amino-1-(5-phospho-beta-D-ribosyl)imidazole-4-carboxamide) and fumarate, and of adenylosuccinate (ADS or N(6)-(1,2-dicarboxyethyl)-AMP) to adenosine monophosphate (AMP) and fumarate. This Buchnera aphidicola subsp. Baizongia pistaciae (strain Bp) protein is Adenylosuccinate lyase (purB).